The chain runs to 162 residues: NADH-quinone oxidoreductase subunit I (162 aa).

2 consecutive 4Fe-4S ferredoxin-type domains span residues 52–82 (LRRYPNGEERCIACKLCEAICPAQAITIEAG) and 93–122 (TRYDIDMVKCIYCGFCQEACPVDAIVEGPN). Positions 62, 65, 68, 72, 102, 105, 108, and 112 each coordinate [4Fe-4S] cluster.

This sequence belongs to the complex I 23 kDa subunit family. As to quaternary structure, NDH-1 is composed of 14 different subunits. Subunits NuoA, H, J, K, L, M, N constitute the membrane sector of the complex. [4Fe-4S] cluster is required as a cofactor.

The protein resides in the cell inner membrane. It carries out the reaction a quinone + NADH + 5 H(+)(in) = a quinol + NAD(+) + 4 H(+)(out). Functionally, NDH-1 shuttles electrons from NADH, via FMN and iron-sulfur (Fe-S) centers, to quinones in the respiratory chain. The immediate electron acceptor for the enzyme in this species is believed to be ubiquinone. Couples the redox reaction to proton translocation (for every two electrons transferred, four hydrogen ions are translocated across the cytoplasmic membrane), and thus conserves the redox energy in a proton gradient. This is NADH-quinone oxidoreductase subunit I from Methylocella silvestris (strain DSM 15510 / CIP 108128 / LMG 27833 / NCIMB 13906 / BL2).